The primary structure comprises 138 residues: ATP synthase epsilon chain (138 aa).

Belongs to the ATPase epsilon chain family. As to quaternary structure, F-type ATPases have 2 components, CF(1) - the catalytic core - and CF(0) - the membrane proton channel. CF(1) has five subunits: alpha(3), beta(3), gamma(1), delta(1), epsilon(1). CF(0) has three main subunits: a, b and c.

It localises to the cell inner membrane. In terms of biological role, produces ATP from ADP in the presence of a proton gradient across the membrane. In Geotalea daltonii (strain DSM 22248 / JCM 15807 / FRC-32) (Geobacter daltonii), this protein is ATP synthase epsilon chain.